The chain runs to 133 residues: ATP synthase epsilon chain (133 aa).

It belongs to the ATPase epsilon chain family. F-type ATPases have 2 components, CF(1) - the catalytic core - and CF(0) - the membrane proton channel. CF(1) has five subunits: alpha(3), beta(3), gamma(1), delta(1), epsilon(1). CF(0) has three main subunits: a, b and c.

Its subcellular location is the cell membrane. Functionally, produces ATP from ADP in the presence of a proton gradient across the membrane. The polypeptide is ATP synthase epsilon chain (Staphylococcus haemolyticus (strain JCSC1435)).